The chain runs to 163 residues: NADH-quinone oxidoreductase subunit I (163 aa).

4Fe-4S ferredoxin-type domains lie at 54–84 (LRRY…IDAE) and 94–123 (TRYD…EGPN). Residues cysteine 64, cysteine 67, cysteine 70, cysteine 74, cysteine 103, cysteine 106, cysteine 109, and cysteine 113 each coordinate [4Fe-4S] cluster.

This sequence belongs to the complex I 23 kDa subunit family. NDH-1 is composed of at least 14 different subunits, Nqo1 to Nqo14. The complex has a L-shaped structure, with the hydrophobic arm (subunits Nqo7, Nqo8, Nqo10 to Nqo14) embedded in the inner membrane and the hydrophilic peripheral arm (subunits Nqo1 to Nqo6, Nqo9) protruding into the bacterial cytoplasm. The hydrophilic domain contains all the redox centers. NADH-quinone oxidoreductase forms a supercomplex with ubiquinol-cytochrome c reductase complex (complex III or cytochrome b-c1 complex) and cytochrome c oxidase (complex IV), which stabilizes the NADH-quinone oxidoreductase complex. [4Fe-4S] cluster is required as a cofactor.

It is found in the cell inner membrane. It catalyses the reaction a quinone + NADH + 5 H(+)(in) = a quinol + NAD(+) + 4 H(+)(out). In terms of biological role, NDH-1 shuttles electrons from NADH, via FMN and iron-sulfur (Fe-S) centers, to quinones in the respiratory chain. The immediate electron acceptor for the enzyme in this species is believed to be ubiquinone. Couples the redox reaction to proton translocation (for every two electrons transferred, four hydrogen ions are translocated across the cytoplasmic membrane), and thus conserves the redox energy in a proton gradient. In Paracoccus denitrificans (strain Pd 1222), this protein is NADH-quinone oxidoreductase subunit I.